The chain runs to 108 residues: uncharacterized protein (108 aa).

A helical transmembrane segment spans residues 25 to 45 (VILKSFLLISSWVILVLLLVI).

The protein localises to the membrane. This is an uncharacterized protein from Saccharomyces cerevisiae (strain ATCC 204508 / S288c) (Baker's yeast).